An 85-amino-acid polypeptide reads, in one-letter code: U4-theraphotoxin-Hhn1h (85 aa).

The N-terminal stretch at 1-22 (MKVTLIAILTCAAVLVLHTTAA) is a signal peptide. Positions 23 to 48 (EELEAESQLMEVGMPDTELAAVDEER) are excised as a propeptide. 3 disulfides stabilise this stretch: C52–C66, C56–C77, and C71–C82.

Belongs to the neurotoxin 12 (Hwtx-2) family. 02 (Hwtx-2) subfamily. As to expression, expressed by the venom gland.

It is found in the secreted. In terms of biological role, postsynaptic neurotoxin. The chain is U4-theraphotoxin-Hhn1h from Cyriopagopus hainanus (Chinese bird spider).